The sequence spans 739 residues: Phosphoribosylformylglycinamidine synthase subunit PurL (739 aa).

Residue H53 is part of the active site. Positions 56 and 95 each coordinate ATP. E97 lines the Mg(2+) pocket. Residues 98–101 (SHNH) and R120 each bind substrate. The active-site Proton acceptor is H99. D121 is a binding site for Mg(2+). Residue Q244 participates in substrate binding. Position 274 (D274) interacts with Mg(2+). 318–320 (ESQ) contributes to the substrate binding site. Residues D501 and G538 each contribute to the ATP site. Position 539 (N539) interacts with Mg(2+). S541 is a binding site for substrate.

It belongs to the FGAMS family. As to quaternary structure, monomer. Part of the FGAM synthase complex composed of 1 PurL, 1 PurQ and 2 PurS subunits.

The protein resides in the cytoplasm. It catalyses the reaction N(2)-formyl-N(1)-(5-phospho-beta-D-ribosyl)glycinamide + L-glutamine + ATP + H2O = 2-formamido-N(1)-(5-O-phospho-beta-D-ribosyl)acetamidine + L-glutamate + ADP + phosphate + H(+). It participates in purine metabolism; IMP biosynthesis via de novo pathway; 5-amino-1-(5-phospho-D-ribosyl)imidazole from N(2)-formyl-N(1)-(5-phospho-D-ribosyl)glycinamide: step 1/2. Functionally, part of the phosphoribosylformylglycinamidine synthase complex involved in the purines biosynthetic pathway. Catalyzes the ATP-dependent conversion of formylglycinamide ribonucleotide (FGAR) and glutamine to yield formylglycinamidine ribonucleotide (FGAM) and glutamate. The FGAM synthase complex is composed of three subunits. PurQ produces an ammonia molecule by converting glutamine to glutamate. PurL transfers the ammonia molecule to FGAR to form FGAM in an ATP-dependent manner. PurS interacts with PurQ and PurL and is thought to assist in the transfer of the ammonia molecule from PurQ to PurL. This is Phosphoribosylformylglycinamidine synthase subunit PurL from Listeria monocytogenes serotype 4b (strain F2365).